The sequence spans 133 residues: Large-conductance mechanosensitive channel (133 aa).

2 helical membrane passes run V14–L34 and G67–V87.

The protein belongs to the MscL family. Homopentamer.

It is found in the cell membrane. In terms of biological role, channel that opens in response to stretch forces in the membrane lipid bilayer. May participate in the regulation of osmotic pressure changes within the cell. This Bacillus mycoides (strain KBAB4) (Bacillus weihenstephanensis) protein is Large-conductance mechanosensitive channel.